A 95-amino-acid chain; its full sequence is Putative defensin-like protein 252 (95 aa).

Positions 1–27 are cleaved as a signal peptide; that stretch reads MRCVTSFVVLCILMFLVVNNVKVDVKA. Disulfide bonds link Cys34/Cys93, Cys45/Cys72, Cys56/Cys85, and Cys70/Cys87.

It belongs to the DEFL family.

The protein resides in the secreted. This Arabidopsis thaliana (Mouse-ear cress) protein is Putative defensin-like protein 252 (SCRL13).